Reading from the N-terminus, the 296-residue chain is Tubulin polyglutamylase complex subunit 2 (296 aa).

A compositionally biased stretch (basic residues) spans 254–265; sequence SKNKILIPKKKG. The disordered stretch occupies residues 254-296; sequence SKNKILIPKKKGPVPPASGQKGPGPLPPPTSKPTTGSGNPVRK. Over residues 285–296 the composition is skewed to low complexity; it reads KPTTGSGNPVRK.

As to quaternary structure, part of the neuronal tubulin polyglutamylase complex which contains TPGS1, TPGS2, TTLL1, LRRC49 and NICN1. Interacts with CSTPP1 and LRRC49.

It is found in the cytoplasm. Its subcellular location is the cytoskeleton. The protein resides in the microtubule organizing center. The protein localises to the centrosome. It localises to the centriolar satellite. In terms of biological role, subunit of the tubulin polyglutamylase complex (TPGC). The complex mediates cilia and flagella polyglutamylation which is essential for their biogenesis and motility. The chain is Tubulin polyglutamylase complex subunit 2 (Tpgs2) from Mus musculus (Mouse).